A 164-amino-acid chain; its full sequence is MTQITFKNNPIKLSGSEVNEGDIAPNFTVLDNSLNQITLDDYKNKKKLISVIPSIDTGVCDSQTRKFNEEASAEDGVVLTISVDLPFAQKRWCASSGLDNVITLSDHKDLSFGRNYGLVMDELRLLARSVFVLNENNKVVYKEIVSEGTNYPDFEAALKAYRNI.

The Thioredoxin domain maps to 18-163 (VNEGDIAPNF…FEAALKAYRN (146 aa)). The active-site Cysteine sulfenic acid (-SOH) intermediate is cysteine 60. An intrachain disulfide couples cysteine 60 to cysteine 93.

The protein belongs to the peroxiredoxin family. Tpx subfamily. Homodimer.

The enzyme catalyses a hydroperoxide + [thioredoxin]-dithiol = an alcohol + [thioredoxin]-disulfide + H2O. Functionally, thiol-specific peroxidase that catalyzes the reduction of hydrogen peroxide and organic hydroperoxides to water and alcohols, respectively. Plays a role in cell protection against oxidative stress by detoxifying peroxides. This chain is Thiol peroxidase, found in Staphylococcus epidermidis (strain ATCC 35984 / DSM 28319 / BCRC 17069 / CCUG 31568 / BM 3577 / RP62A).